We begin with the raw amino-acid sequence, 679 residues long: Dihydroxyacetone phosphate acyltransferase (679 aa).

Phosphoserine is present on serine 11. The short motif at 161–166 (HRSYID) is the HXXXXD motif element. An N6-acetyllysine modification is found at lysine 642.

Belongs to the GPAT/DAPAT family. Part of a heterotrimeric complex composed of GNPAT, AGPS and a modified form of GNPAT.

The protein resides in the peroxisome membrane. It carries out the reaction dihydroxyacetone phosphate + an acyl-CoA = a 1-acylglycerone 3-phosphate + CoA. The enzyme catalyses dihydroxyacetone phosphate + hexadecanoyl-CoA = 1-hexadecanoylglycerone 3-phosphate + CoA. The protein operates within membrane lipid metabolism; glycerophospholipid metabolism. Functionally, dihydroxyacetonephosphate acyltransferase catalyzing the first step in the biosynthesis of plasmalogens, a subset of phospholipids that differ from other glycerolipids by having an alkyl chain attached through a vinyl ether linkage at the sn-1 position of the glycerol backbone, and which unique physical properties have an impact on various aspects of cell signaling and membrane biology. The protein is Dihydroxyacetone phosphate acyltransferase of Oryctolagus cuniculus (Rabbit).